Consider the following 298-residue polypeptide: Tyrosine recombinase XerC (298 aa).

The 83-residue stretch at 1–83 folds into the Core-binding (CB) domain; it reads MHAAVERFLH…ALSRFADHLV (83 aa). Residues 104-283 form the Tyr recombinase domain; the sequence is HLPRPVDVDQ…DWQHLADAYD (180 aa). Active-site residues include arginine 144, lysine 166, histidine 235, arginine 238, and histidine 261. Tyrosine 270 acts as the O-(3'-phospho-DNA)-tyrosine intermediate in catalysis.

The protein belongs to the 'phage' integrase family. XerC subfamily. Forms a cyclic heterotetrameric complex composed of two molecules of XerC and two molecules of XerD.

The protein localises to the cytoplasm. In terms of biological role, site-specific tyrosine recombinase, which acts by catalyzing the cutting and rejoining of the recombining DNA molecules. The XerC-XerD complex is essential to convert dimers of the bacterial chromosome into monomers to permit their segregation at cell division. It also contributes to the segregational stability of plasmids. This is Tyrosine recombinase XerC from Chromohalobacter salexigens (strain ATCC BAA-138 / DSM 3043 / CIP 106854 / NCIMB 13768 / 1H11).